A 497-amino-acid chain; its full sequence is MAGGIEIAFEPLSSRGRGGDVVVFVGDDLALSGPAAEILGRPGAELVVRAAASERFKGKAQSALVLPAPAGVEADRLVVIGLGSEKDRAKTDWTLLGGFTAGKVGGRSARVVLDWPGYAGSARDVADFTLGARLRSYRFDQYKTKKKDEDEAGAALSLLVADPSGAQAAARDAAAVAEGVILARNLVNEPPNVLYPEEYARRVSELTSLGVEIEILDVARMKELGMGALLAVAQGSAREPRVAIMRWNGADDPSEPPLALIGKGVVFDSGGVSIKSAGGMEDMKGDMGGSAAVVGTLHALAARKAKANVVGAIGIVENMPDGNSYRPSDIVTSLSGQTIEVINTDAEGRLVLADVLWHVQATYKPKAMIDLATLTGAIIVALGQDIAGLFSNDDALSAQITAAGEAAGEKVWRMPLIPAFDKAIDSKFADMKNTGGRHGGAATAAAFLKRYVNDVPWAHLDIAGVGMSSTPSEINRSWGAGWGVRLLDRLVREHYER.

Lys-263 and Asp-268 together coordinate Mn(2+). Lys-275 is an active-site residue. Positions 286, 345, and 347 each coordinate Mn(2+). Residue Arg-349 is part of the active site.

Belongs to the peptidase M17 family. The cofactor is Mn(2+).

It localises to the cytoplasm. The catalysed reaction is Release of an N-terminal amino acid, Xaa-|-Yaa-, in which Xaa is preferably Leu, but may be other amino acids including Pro although not Arg or Lys, and Yaa may be Pro. Amino acid amides and methyl esters are also readily hydrolyzed, but rates on arylamides are exceedingly low.. It catalyses the reaction Release of an N-terminal amino acid, preferentially leucine, but not glutamic or aspartic acids.. Functionally, presumably involved in the processing and regular turnover of intracellular proteins. Catalyzes the removal of unsubstituted N-terminal amino acids from various peptides. This is Probable cytosol aminopeptidase from Methylorubrum populi (strain ATCC BAA-705 / NCIMB 13946 / BJ001) (Methylobacterium populi).